The sequence spans 136 residues: uncharacterized protein (136 aa).

As to expression, widely expressed.

This is an uncharacterized protein from Homo sapiens (Human).